Reading from the N-terminus, the 173-residue chain is Protein SUGARY ENHANCER 1 (173 aa).

The segment at 1–31 is disordered; that stretch reads MIRPAPWVGAGHRGRGGEAGACTESLGSESG.

It belongs to the fantastic four family.

Involved in starch metabolism in endosperm. Acts as a modifier of SUGARY1 (SU1), an isoamylase starch-debranching enzyme involved in amylopectin biosynthesis in endosperm. The protein is Protein SUGARY ENHANCER 1 of Zea mays (Maize).